The following is a 300-amino-acid chain: Cyclic nucleotide synthase CdnE01 (300 aa).

The Mg(2+) site is built by Asp-63, Asp-65, and Asp-137.

This sequence belongs to the CD-NTase family. E01 subfamily. Mg(2+) is required as a cofactor.

With respect to regulation, binds to and probably activated by a virus-derived, approximately 400 nucleotide RNA (called CBASS-activating bacteriophage RNA, cabRNA) that begins in the viral terminase subunit terS and extends into terL, as well as by a shorter RNA with part of the cabRNA sequence able to form a hairpin. RNA secondary and/or tertiary structure, as well as viral infection itself, are important for CdnE activation. Its function is as follows. Cyclic nucleotide synthase (second messenger synthase) of a CBASS antivirus system. CBASS (cyclic oligonucleotide-based antiphage signaling system) provides immunity against bacteriophage. The CD-NTase protein synthesizes cyclic nucleotides in response to infection; these serve as specific second messenger signals. The signals activate a diverse range of effectors, leading to bacterial cell death and thus abortive phage infection. A type I-B CBASS system. In terms of biological role, protects S.aureus against phage infection. When the CBASS operon (cdnE and the following gene) is introduced in S.aureus strain RN4220 there is strong protection against lytic DNA phages 80alpha-vir and phi-NM1-gamma-6 but little to no protection against phages phi-NM4-gamma-4 or phi-12-gamma-3. The sequence is that of Cyclic nucleotide synthase CdnE01 from Staphylococcus haemolyticus.